A 197-amino-acid chain; its full sequence is Holliday junction branch migration complex subunit RuvA (197 aa).

The tract at residues 1–63 (MISSLRGEVL…EDSMTLYGFV (63 aa)) is domain I. Residues 64–139 (DGETRDLFLT…KVGPAGSAAT (76 aa)) form a domain II region. Residues 139-143 (TAPAV) are flexible linker. Residues 144 to 197 (NGHTVRAPVVEALVGLGFAAKQAEEATDKVLAGDGEATTSSALRAALSLLGKAR) are domain III.

The protein belongs to the RuvA family. Homotetramer. Forms an RuvA(8)-RuvB(12)-Holliday junction (HJ) complex. HJ DNA is sandwiched between 2 RuvA tetramers; dsDNA enters through RuvA and exits via RuvB. An RuvB hexamer assembles on each DNA strand where it exits the tetramer. Each RuvB hexamer is contacted by two RuvA subunits (via domain III) on 2 adjacent RuvB subunits; this complex drives branch migration. In the full resolvosome a probable DNA-RuvA(4)-RuvB(12)-RuvC(2) complex forms which resolves the HJ.

The protein resides in the cytoplasm. Functionally, the RuvA-RuvB-RuvC complex processes Holliday junction (HJ) DNA during genetic recombination and DNA repair, while the RuvA-RuvB complex plays an important role in the rescue of blocked DNA replication forks via replication fork reversal (RFR). RuvA specifically binds to HJ cruciform DNA, conferring on it an open structure. The RuvB hexamer acts as an ATP-dependent pump, pulling dsDNA into and through the RuvAB complex. HJ branch migration allows RuvC to scan DNA until it finds its consensus sequence, where it cleaves and resolves the cruciform DNA. The polypeptide is Holliday junction branch migration complex subunit RuvA (Mycobacterium marinum (strain ATCC BAA-535 / M)).